The chain runs to 206 residues: Small ribosomal subunit protein uS4 (206 aa).

An S4 RNA-binding domain is found at 93 to 156 (CRLDNLVYRL…RKIKIIAEAL (64 aa)).

This sequence belongs to the universal ribosomal protein uS4 family. Part of the 30S ribosomal subunit. Contacts protein S5. The interaction surface between S4 and S5 is involved in control of translational fidelity.

Functionally, one of the primary rRNA binding proteins, it binds directly to 16S rRNA where it nucleates assembly of the body of the 30S subunit. Its function is as follows. With S5 and S12 plays an important role in translational accuracy. In Protochlamydia amoebophila (strain UWE25), this protein is Small ribosomal subunit protein uS4.